The chain runs to 139 residues: Putative nickel-responsive regulator (139 aa).

Ni(2+)-binding residues include His-79, His-90, His-92, and Cys-98.

Belongs to the transcriptional regulatory CopG/NikR family. Requires Ni(2+) as cofactor.

In terms of biological role, transcriptional regulator. The protein is Putative nickel-responsive regulator of Geobacter sp. (strain M21).